We begin with the raw amino-acid sequence, 73 residues long: Small ribosomal subunit protein bS18 (73 aa).

Belongs to the bacterial ribosomal protein bS18 family. In terms of assembly, part of the 30S ribosomal subunit. Forms a tight heterodimer with protein bS6.

Binds as a heterodimer with protein bS6 to the central domain of the 16S rRNA, where it helps stabilize the platform of the 30S subunit. The protein is Small ribosomal subunit protein bS18 of Neorickettsia sennetsu (strain ATCC VR-367 / Miyayama) (Ehrlichia sennetsu).